Consider the following 787-residue polypeptide: Protein FAM149A (787 aa).

Disordered regions lie at residues 22–105 (SPAV…SSGA), 144–175 (GSNS…APGP), 189–226 (EEWT…PTNF), 238–284 (ASES…SWRD), 432–455 (DGDE…GLPP), 573–602 (LQQR…ASSR), and 665–697 (AVQT…SYRG). Positions 37-46 (SVDSGASTSL) are enriched in polar residues. Low complexity-rich tracts occupy residues 51 to 65 (TLTL…TAAS) and 96 to 105 (SGSLPSSSGA). Positions 144–155 (GSNSVTASSPRN) are enriched in polar residues. Acidic residues predominate over residues 189–200 (EEWTSDSDSQDD). Residues 201–220 (PEGRGLSEGLRKQSSEKSKD) are compositionally biased toward basic and acidic residues. Low complexity predominate over residues 239 to 250 (SESPSSFSSSGS). Polar residues predominate over residues 251-261 (RTPTEAHNSWP). Low complexity predominate over residues 262–274 (GSSTQSSTTGLST).

It belongs to the FAM149 family.

In Mus musculus (Mouse), this protein is Protein FAM149A (Fam149a).